Here is a 702-residue protein sequence, read N- to C-terminus: Ribosomal RNA large subunit methyltransferase K/L (702 aa).

The region spanning 43-154 is the THUMP domain; sequence LVYQSLMWSR…KETASIALDL (112 aa).

Belongs to the methyltransferase superfamily. RlmKL family.

It localises to the cytoplasm. It carries out the reaction guanosine(2445) in 23S rRNA + S-adenosyl-L-methionine = N(2)-methylguanosine(2445) in 23S rRNA + S-adenosyl-L-homocysteine + H(+). It catalyses the reaction guanosine(2069) in 23S rRNA + S-adenosyl-L-methionine = N(2)-methylguanosine(2069) in 23S rRNA + S-adenosyl-L-homocysteine + H(+). In terms of biological role, specifically methylates the guanine in position 2445 (m2G2445) and the guanine in position 2069 (m7G2069) of 23S rRNA. This is Ribosomal RNA large subunit methyltransferase K/L from Shigella dysenteriae serotype 1 (strain Sd197).